Consider the following 79-residue polypeptide: RNA-binding protein Hfq (79 aa).

Residues 10-69 (DPFLNALRKEHVPVSIYLVNGIKLQGNIESFDQYVVLLRNTVTQMVYKHAISTVVPARAV) enclose the Sm domain.

It belongs to the Hfq family. Homohexamer.

Its function is as follows. RNA chaperone that binds small regulatory RNA (sRNAs) and mRNAs to facilitate mRNA translational regulation in response to envelope stress, environmental stress and changes in metabolite concentrations. Also binds with high specificity to tRNAs. This Ralstonia nicotianae (strain ATCC BAA-1114 / GMI1000) (Ralstonia solanacearum) protein is RNA-binding protein Hfq.